Here is a 20-residue protein sequence, read N- to C-terminus: Peptidase T (20 aa).

The protein belongs to the peptidase M20B family. Zn(2+) serves as cofactor. The cofactor is Co(2+).

Its subcellular location is the cell envelope. The catalysed reaction is Release of the N-terminal residue from a tripeptide.. Its activity is regulated as follows. Inhibited by the chelating agents EDTA and 1,10-phenanthroline, by bestatin and amastatin, p-hydroxymercuribenzoate and some divalent cations at high concentration. Functionally, cleaves a wide range of dipeptides and tripeptides, but does not display activity against larger peptides. May have a role in the survival of F.nucleatum in the subgingival environment of the mouth. The chain is Peptidase T (pepT) from Fusobacterium nucleatum subsp. polymorphum (Fusobacterium polymorphum).